The following is a 168-amino-acid chain: Endoribonuclease YbeY (168 aa).

Residues His123, His127, and His133 each coordinate Zn(2+).

It belongs to the endoribonuclease YbeY family. Zn(2+) is required as a cofactor.

It is found in the cytoplasm. Single strand-specific metallo-endoribonuclease involved in late-stage 70S ribosome quality control and in maturation of the 3' terminus of the 16S rRNA. In Francisella tularensis subsp. holarctica (strain LVS), this protein is Endoribonuclease YbeY.